A 243-amino-acid chain; its full sequence is UPF0246 protein M28_Spy1772 (243 aa).

Belongs to the UPF0246 family.

The protein is UPF0246 protein M28_Spy1772 of Streptococcus pyogenes serotype M28 (strain MGAS6180).